The chain runs to 266 residues: MRKNTYAMRYIAGQPAERILPPGSFASIGQALPAGAPLSSDEKIRVLVWNIFKQQRAEWLSVLKNFGKDAHLVLLQEAQTTPELVRFATTNYLAADQVPAFVLPQHPSGVMTLSAAHPVYCCPLREREPILRLAKSALVTVYPLPDTRLLMVVNIHAVNFSLGVDVYSKQLLPIGDQIAHHSGPIIMAGDFNAWSRPRMNALYRFAREMSLREVRFTDDQRRKAFGRPLDFVFYRGLNVHEASVLVTRASDHNPLLVEFSPGKPDK.

It belongs to the UPF0294 family.

The protein localises to the cytoplasm. The sequence is that of UPF0294 protein Ent638_0743 from Enterobacter sp. (strain 638).